The following is a 522-amino-acid chain: Glutamate--cysteine ligase (522 aa).

This sequence belongs to the glutamate--cysteine ligase type 1 family. Type 1 subfamily.

The enzyme catalyses L-cysteine + L-glutamate + ATP = gamma-L-glutamyl-L-cysteine + ADP + phosphate + H(+). It participates in sulfur metabolism; glutathione biosynthesis; glutathione from L-cysteine and L-glutamate: step 1/2. The protein is Glutamate--cysteine ligase of Shewanella halifaxensis (strain HAW-EB4).